The following is a 447-amino-acid chain: MTTILKHLPVGQRIGIAFSGGLDTSAALLWMRQKGAVPYAYTANLGQPDEEDYDAIPRRAMEYGAENARLIDCRKQLVAEGIAAIQCGAFHNTTGGLTYFNTTPLGRAVTGTMLVAAMKEDGVNIWGDGSTYKGNDIERFYRYGLLTNAELQIYKPWLDTDFIDELGGRHEMSEFMIACGFDYKMSVEKAYSTDSNMLGATHEAKDLEYLNSSVKIVNPIMGVKFWDESVKIPAEEVTVRFEQGHPVALNGKTFSDDVEMMLEANRIGGRHGLGMSDQIENRIIEAKSRGIYEAPGMALLHIAYERLLTGIHNEDTIEQYHAHGRQLGRLLYQGRWFDSQALMLRDSLQRWVASQITGEVTLELRRGNDYSILNTVSENLTYKPERLTMEKGDSVFSPDDRIGQLTMRNLDITDTREKLFGYAKTGLLSSSAASGVPQMENLENKGQ.

ATP is bound by residues 17-25 and A43; that span reads AFSGGLDTS. Y99 serves as a coordination point for L-citrulline. ATP-binding residues include G129 and T131. L-aspartate contacts are provided by T131, N135, and D136. N135 contacts L-citrulline. An ATP-binding site is contributed by D136. Positions 139 and 192 each coordinate L-citrulline. D194 is an ATP binding site. The L-citrulline site is built by T201, E203, and E280.

This sequence belongs to the argininosuccinate synthase family. Type 2 subfamily. Homotetramer.

It is found in the cytoplasm. The enzyme catalyses L-citrulline + L-aspartate + ATP = 2-(N(omega)-L-arginino)succinate + AMP + diphosphate + H(+). Its pathway is amino-acid biosynthesis; L-arginine biosynthesis; L-arginine from L-ornithine and carbamoyl phosphate: step 2/3. The protein is Argininosuccinate synthase (argG) of Escherichia coli O157:H7.